The primary structure comprises 319 residues: 4-hydroxy-3-methylbut-2-enyl diphosphate reductase (319 aa).

Cysteine 15 lines the [4Fe-4S] cluster pocket. The (2E)-4-hydroxy-3-methylbut-2-enyl diphosphate site is built by histidine 44 and histidine 77. 2 residues coordinate dimethylallyl diphosphate: histidine 44 and histidine 77. Isopentenyl diphosphate contacts are provided by histidine 44 and histidine 77. Residue cysteine 99 coordinates [4Fe-4S] cluster. Residue histidine 127 participates in (2E)-4-hydroxy-3-methylbut-2-enyl diphosphate binding. Residue histidine 127 coordinates dimethylallyl diphosphate. Position 127 (histidine 127) interacts with isopentenyl diphosphate. Glutamate 129 acts as the Proton donor in catalysis. Threonine 167 serves as a coordination point for (2E)-4-hydroxy-3-methylbut-2-enyl diphosphate. Cysteine 197 lines the [4Fe-4S] cluster pocket. (2E)-4-hydroxy-3-methylbut-2-enyl diphosphate-binding residues include serine 225, serine 226, asparagine 227, and serine 269. Dimethylallyl diphosphate-binding residues include serine 225, serine 226, asparagine 227, and serine 269. Isopentenyl diphosphate is bound by residues serine 225, serine 226, asparagine 227, and serine 269.

Belongs to the IspH family. It depends on [4Fe-4S] cluster as a cofactor.

The catalysed reaction is isopentenyl diphosphate + 2 oxidized [2Fe-2S]-[ferredoxin] + H2O = (2E)-4-hydroxy-3-methylbut-2-enyl diphosphate + 2 reduced [2Fe-2S]-[ferredoxin] + 2 H(+). It carries out the reaction dimethylallyl diphosphate + 2 oxidized [2Fe-2S]-[ferredoxin] + H2O = (2E)-4-hydroxy-3-methylbut-2-enyl diphosphate + 2 reduced [2Fe-2S]-[ferredoxin] + 2 H(+). It participates in isoprenoid biosynthesis; dimethylallyl diphosphate biosynthesis; dimethylallyl diphosphate from (2E)-4-hydroxy-3-methylbutenyl diphosphate: step 1/1. It functions in the pathway isoprenoid biosynthesis; isopentenyl diphosphate biosynthesis via DXP pathway; isopentenyl diphosphate from 1-deoxy-D-xylulose 5-phosphate: step 6/6. Its function is as follows. Catalyzes the conversion of 1-hydroxy-2-methyl-2-(E)-butenyl 4-diphosphate (HMBPP) into a mixture of isopentenyl diphosphate (IPP) and dimethylallyl diphosphate (DMAPP). Acts in the terminal step of the DOXP/MEP pathway for isoprenoid precursor biosynthesis. The polypeptide is 4-hydroxy-3-methylbut-2-enyl diphosphate reductase (Rhodopirellula baltica (strain DSM 10527 / NCIMB 13988 / SH1)).